The chain runs to 178 residues: Neuroblastoma suppressor of tumorigenicity 1 (178 aa).

The first 16 residues, 1–16, serve as a signal peptide directing secretion; sequence MLWVLVGTVLPVMLLA. 5 disulfides stabilise this stretch: Cys-34/Cys-84, Cys-48/Cys-98, Cys-58/Cys-117, Cys-62/Cys-119, and Cys-81/Cys-122. One can recognise a CTCK domain in the interval 34–123; that stretch reads CEAKNITQIV…IVHCSCQACG (90 aa). Residues 130–178 form a disordered region; sequence GLNVYMQGEDGPGSQPGSHSHSHPHPGCQTPEPEEPPGAPQVEEEGAED.

Belongs to the DAN family. In terms of assembly, homodimer. In terms of tissue distribution, most abundant in lung, brain, intestine and kidney.

Its subcellular location is the secreted. Functionally, possible candidate as a tumor suppressor gene of neuroblastoma. May play an important role in preventing cells from entering the final stage (G1/S) of the transformation process. The chain is Neuroblastoma suppressor of tumorigenicity 1 (Nbl1) from Rattus norvegicus (Rat).